We begin with the raw amino-acid sequence, 410 residues long: Probable serine/threonine-protein kinase PBL8 (410 aa).

The span at 1 to 10 (MGNCGTRDEA) shows a compositional bias: basic and acidic residues. The tract at residues 1 to 45 (MGNCGTRDEAAVFTPQAQAQQLQKKHSRSVSDLSDPSTPRFRDDS) is disordered. The N-myristoyl glycine moiety is linked to residue Gly2. Cys4 is lipidated: S-palmitoyl cysteine. Thr58 carries the phosphothreonine modification. The Protein kinase domain occupies 69–350 (FRPDYILGEG…DVVETLEPLQ (282 aa)). ATP is bound by residues 75–83 (LGEGGFGTV) and Lys104. Tyr149 is modified (phosphotyrosine). Asp199 functions as the Proton acceptor in the catalytic mechanism. Phosphoserine occurs at positions 203 and 233. A phosphothreonine mark is found at Thr234 and Thr239. Tyr247 carries the phosphotyrosine modification.

It belongs to the protein kinase superfamily. Ser/Thr protein kinase family. In terms of assembly, interacts with the Xanthomonas campestris effector XopAC/AvrAC.

The protein localises to the cell membrane. It carries out the reaction L-seryl-[protein] + ATP = O-phospho-L-seryl-[protein] + ADP + H(+). The enzyme catalyses L-threonyl-[protein] + ATP = O-phospho-L-threonyl-[protein] + ADP + H(+). Functionally, may be involved in plant defense signaling. The chain is Probable serine/threonine-protein kinase PBL8 from Arabidopsis thaliana (Mouse-ear cress).